The following is a 221-amino-acid chain: Deep sea actinoporin Cjtox II (221 aa).

The signal sequence occupies residues 1–19 (MNRLIIVCLVAAMIYSTIA). Residues 20–42 (LPMKEDISNDERPISVNEEPVKK) constitute a propeptide that is removed on maturation. Phosphocholine-binding residues include S96, V129, S147, P149, Y175, Y179, and Y180. The segment at 147 to 162 (SVPYDYNWYENWWNIK) is trp-rich region, which is important for the binding to lipid membrane. A Cell attachment site, crucial for protein stability motif is present at residues 186 to 188 (KGD).

It belongs to the actinoporin family. Sea anemone subfamily. Octamer or nonamer in membranes. Monomer in the soluble state. In terms of tissue distribution, expressed in actinopharynx and in gastric filaments. Is not expressed in tentacles.

It localises to the secreted. Its subcellular location is the nematocyst. The protein resides in the target cell membrane. Functionally, may be involved in digestion of prey. Pore-forming protein that forms cations-selective hydrophilic pores of around 1 nm and causes cytolysis. Pore formation is a multi-step process that involves specific recognition of membrane sphingomyelin (but neither cholesterol nor phosphatidylcholine) using aromatic rich region and adjacent phosphocholine (POC) binding site, firm binding to the membrane (mainly driven by hydrophobic interactions) accompanied by the transfer of the N-terminal region to the lipid-water interface and finally pore formation after oligomerization of monomers. Shows hemolytic activity on equine erythrocytes. Hemolysis is highly inhibited in presence of sphingomyelin, suggesting that this protein targets sphingomyelin. The polypeptide is Deep sea actinoporin Cjtox II (Cribrinopsis japonica (Deep-sea anemone)).